A 186-amino-acid polypeptide reads, in one-letter code: Elongation factor P (186 aa).

It belongs to the elongation factor P family.

The protein localises to the cytoplasm. It functions in the pathway protein biosynthesis; polypeptide chain elongation. In terms of biological role, involved in peptide bond synthesis. Stimulates efficient translation and peptide-bond synthesis on native or reconstituted 70S ribosomes in vitro. Probably functions indirectly by altering the affinity of the ribosome for aminoacyl-tRNA, thus increasing their reactivity as acceptors for peptidyl transferase. This Prochlorococcus marinus (strain MIT 9303) protein is Elongation factor P.